Here is a 547-residue protein sequence, read N- to C-terminus: Riboflavin transporter RibJ (547 aa).

Topologically, residues 1–11 are cytoplasmic; it reads MLPSFTRKPAD. The helical transmembrane segment at 12–32 threads the bilayer; sequence HPIGYLVALSGLLMQLMSYGI. Over 33–58 the chain is Extracellular; it reads DNSYSIFSEDMHNDPSLGFPSITAIS. The chain crosses the membrane as a helical span at residues 59-79; it reads LGNSVSLGLSPAFGVLAGFCV. Topologically, residues 80 to 85 are cytoplasmic; the sequence is DRLPPR. Residues 86–106 traverse the membrane as a helical segment; the sequence is FMMALSTILLFTGLWISSTLA. At 107–108 the chain is on the extracellular side; the sequence is AN. A helical membrane pass occupies residues 109–129; the sequence is IYVVTFTYCLFASIGTACMLS. At 130 to 144 the chain is on the cytoplasmic side; sequence PGAAATSSWFNRYQG. Residues 145 to 165 traverse the membrane as a helical segment; that stretch reads LAMGINFAGGGIGSAIIPPLA. Residues 166–175 lie on the Extracellular side of the membrane; it reads GKWVVAYGWR. The helical transmembrane segment at 176–196 threads the bilayer; it reads KAFQLMSIFCAIGVLATALSA. At 197–344 the chain is on the cytoplasmic side; sequence RRREPKRDDS…MFTLPFMGNF (148 aa). The tract at residues 198-293 is disordered; sequence RREPKRDDSS…EGLDVTEQSQ (96 aa). Residues 244-255 are compositionally biased toward basic and acidic residues; that stretch reads NEGKEDVREMGR. The chain crosses the membrane as a helical span at residues 345-365; that stretch reads LCWFIYSWAFYSLIYAAVPYI. The Extracellular segment spans residues 366 to 386; it reads SSMGKPGTVYAGVPPIPTDVA. Residues 387–407 traverse the membrane as a helical segment; that stretch reads ATLFTFYGVFQVVGSVLVGWL. Topologically, residues 408–412 are cytoplasmic; that stretch reads ASLVT. Residues 413-433 traverse the membrane as a helical segment; sequence AEFAYVFCATVGGIGCGLLAL. At 434–437 the chain is on the extracellular side; it reads GRSY. Residues 438 to 458 form a helical membrane-spanning segment; the sequence is VAFALLLCIIGFCMAGMFAVM. Over 459–470 the chain is Cytoplasmic; sequence PTLIATHLYGPN. The chain crosses the membrane as a helical span at residues 471 to 491; sequence LGFYFGAVFLAGVVGGFVAPP. Residues 492–505 are Extracellular-facing; that stretch reads MQATIQLRNNGSYA. Asn-501 carries an N-linked (GlcNAc...) asparagine glycan. Residues 506-526 form a helical membrane-spanning segment; that stretch reads FVCVVMSVSMTLSALVCYATL. The Cytoplasmic portion of the chain corresponds to 527–547; it reads WRSKRSGIVLAARKTKLVEIM.

This sequence belongs to the major facilitator superfamily. RibJ family.

It is found in the cell membrane. In terms of biological role, transporter involved in riboflavin (vitamin B2) uptake. Also transports FMN and FAD. This chain is Riboflavin transporter RibJ, found in Trypanosoma brucei brucei (strain 927/4 GUTat10.1).